Here is an 817-residue protein sequence, read N- to C-terminus: E3 ubiquitin-protein ligase TRIM9 (817 aa).

An RING-type zinc finger spans residues 10–50; the sequence is CPVCGSFYREPIILPCSHNLCQACARNILVQTPESESPQSR. Thr-41 is subject to Phosphothreonine. A phosphoserine mark is found at Ser-44, Ser-46, Ser-49, and Ser-53. 2 B box-type zinc fingers span residues 163–212 and 224–266; these read AAAL…LVPP and RKVS…VKAL. Positions 168, 171, 193, 198, 229, 232, 252, and 258 each coordinate Zn(2+). Residues 273–340 are a coiled coil; it reads HKSQLSQALN…KAQLLARVNK (68 aa). One can recognise a COS domain in the interval 374–432; that stretch reads IKENDPSGFLQISDALIRRVHLTEDQWGKGTLTPRMTTDFDLSLDNSPLLQSIHQLDFV. Positions 440–535 constitute a Fibronectin type-III domain; the sequence is VPATPILQLE…KTLVLQTSEA (96 aa). The tract at residues 535-557 is disordered; the sequence is AAGAHETKPMKDTDSEEQTLPFP. The span at 537–547 shows a compositional bias: basic and acidic residues; the sequence is GAHETKPMKDT. The B30.2/SPRY domain maps to 613–794; the sequence is ETQSASYSQL…VQVSLWAPGL (182 aa).

It belongs to the TRIM/RBCC family. Interacts with SNAP25. Auto-ubiquitinated. As to expression, brain. Expression is higher in the cerebral cortex and hippocampus (at protein level). Its expression is mainly confined to the central nervous system. The developing neocortex, the dorsal thalamus, the midbrain, the basal area of the hindbrain and spinal cord show high level of expression during embryogenesis. In adult brain, it is detected in the Purkinje cells of the cerebellum, in the hippocampus, and in the cortex.

Its subcellular location is the cytoplasm. The protein localises to the cell projection. It localises to the dendrite. The protein resides in the cytoplasmic vesicle. It is found in the secretory vesicle. Its subcellular location is the synaptic vesicle. The protein localises to the synapse. It localises to the cytoskeleton. It carries out the reaction S-ubiquitinyl-[E2 ubiquitin-conjugating enzyme]-L-cysteine + [acceptor protein]-L-lysine = [E2 ubiquitin-conjugating enzyme]-L-cysteine + N(6)-ubiquitinyl-[acceptor protein]-L-lysine.. It functions in the pathway protein modification; protein ubiquitination. Functionally, E3 ubiquitin-protein ligase which ubiquitinates itself in cooperation with an E2 enzyme UBE2D2/UBC4 and serves as a targeting signal for proteasomal degradation. May play a role in regulation of neuronal functions. May act as a regulator of synaptic vesicle exocytosis by controlling the availability of SNAP25 for the SNARE complex formation. The chain is E3 ubiquitin-protein ligase TRIM9 (Trim9) from Mus musculus (Mouse).